The sequence spans 993 residues: NACHT, LRR and PYD domains-containing protein 14 (993 aa).

Residues 81 to 403 form the NACHT domain; that stretch reads QTVVLQGAAG…FYLLRENLEE (323 aa). 87-94 provides a ligand contact to ATP; it reads GAAGIGKT. LRR repeat units follow at residues 636–657, 660–680, 688–708, 717–738, 745–765, 774–795, 802–822, 831–852, and 859–879; these read DLKETDLGVNGLKTLCEALKCK, KLRVLRLASCDLNVARCQKLS, SLVFLNLSLNNLSNDGVKSLC, SLERLALASCGLTKAGCKVLSS, RLTHLCLSDNVLEDEGIKLLS, TLQSLVLRSCSFTPIGSEHLST, SLVHLDLGQNKLADNGVKLLC, NLQELELMSCVLTSKACGDLAS, and NLWSLDLGHNILDDAGLNILC.

Belongs to the NLRP family. As to expression, detected in adult ovary and testis. Detected in oocytes and in germ cell elements in seminiferous tubules in adult testis (at protein level).

It localises to the cytoplasm. In terms of biological role, may be involved in inflammation and spermatogenesis. The chain is NACHT, LRR and PYD domains-containing protein 14 (Nlrp14) from Mus musculus (Mouse).